The chain runs to 104 residues: Large ribosomal subunit protein uL24 (104 aa).

The protein belongs to the universal ribosomal protein uL24 family. Part of the 50S ribosomal subunit.

Functionally, one of two assembly initiator proteins, it binds directly to the 5'-end of the 23S rRNA, where it nucleates assembly of the 50S subunit. Its function is as follows. One of the proteins that surrounds the polypeptide exit tunnel on the outside of the subunit. In Chromobacterium violaceum (strain ATCC 12472 / DSM 30191 / JCM 1249 / CCUG 213 / NBRC 12614 / NCIMB 9131 / NCTC 9757 / MK), this protein is Large ribosomal subunit protein uL24.